Consider the following 191-residue polypeptide: RNA pyrophosphohydrolase (191 aa).

In terms of domain architecture, Nudix hydrolase spans 6 to 149 (GYRLNVGIIL…KREVYRQALS (144 aa)). The short motif at 38–59 (GGIKVDEDPDAAMFRELYEEVG) is the Nudix box element. The segment at 162-191 (GAQAVSDAGGTATRQIPVATEPSGPSSSQR) is disordered.

This sequence belongs to the Nudix hydrolase family. RppH subfamily. Requires a divalent metal cation as cofactor.

Accelerates the degradation of transcripts by removing pyrophosphate from the 5'-end of triphosphorylated RNA, leading to a more labile monophosphorylated state that can stimulate subsequent ribonuclease cleavage. This chain is RNA pyrophosphohydrolase, found in Methylococcus capsulatus (strain ATCC 33009 / NCIMB 11132 / Bath).